The primary structure comprises 590 residues: uncharacterized protein (590 aa).

2 disordered regions span residues 306-329 (IAEPQTHTGGADRQRPQRPDGIPY) and 528-590 (QPAP…LMNL). Pro residues predominate over residues 543–563 (PSLPQPVPEPLAPQEPPPPGT).

This is an uncharacterized protein from Ictaluridae (bullhead catfishes).